The chain runs to 208 residues: Uracil phosphoribosyltransferase (208 aa).

5-phospho-alpha-D-ribose 1-diphosphate-binding positions include R78, R103, and 130–138 (DPMLATGGS). Residues I193 and 198 to 200 (GDA) each bind uracil. D199 lines the 5-phospho-alpha-D-ribose 1-diphosphate pocket.

Belongs to the UPRTase family. Mg(2+) is required as a cofactor.

The enzyme catalyses UMP + diphosphate = 5-phospho-alpha-D-ribose 1-diphosphate + uracil. Its pathway is pyrimidine metabolism; UMP biosynthesis via salvage pathway; UMP from uracil: step 1/1. With respect to regulation, allosterically activated by GTP. In terms of biological role, catalyzes the conversion of uracil and 5-phospho-alpha-D-ribose 1-diphosphate (PRPP) to UMP and diphosphate. The chain is Uracil phosphoribosyltransferase from Shewanella baltica (strain OS223).